The chain runs to 516 residues: Serine carboxypeptidase II-3 (516 aa).

A signal peptide spans 1–20 (MKCTVVALVLLVAVQCLVLG). Positions 21-77 (AGPAAAAKARRTRQGDYLNRLRGSPSSRASWESLAAVEEQTTTKAAGRPAPVAAAVE) are excised as a propeptide. 3 disulfide bridges follow: C143/C391, C300/C315, and C339/C359. Residues N194 and N205 are each glycosylated (N-linked (GlcNAc...) asparagine). S236 is an active-site residue. Residue N301 is glycosylated (N-linked (GlcNAc...) asparagine). The propeptide at 342–352 (EKLVTPPIAPS) is linker peptide. An N-linked (GlcNAc...) asparagine glycan is attached at N380. Active-site residues include D427 and H484.

The protein belongs to the peptidase S10 family. Carboxypeptidase II is a dimer, where each monomer is composed of two chains linked by a disulfide bond. The linker peptide is endoproteolytically excised during enzyme maturation.

It carries out the reaction Preferential release of a C-terminal arginine or lysine residue.. This chain is Serine carboxypeptidase II-3 (CXP;2-3), found in Hordeum vulgare (Barley).